Reading from the N-terminus, the 496-residue chain is Angiopoietin-2 (496 aa).

The first 18 residues, 1–18 (MWQIIFLTFGWDLVLASA), serve as a signal peptide directing secretion. N-linked (GlcNAc...) asparagine glycans are attached at residues N89, N119, N133, N151, N240, and N304. Residues 159-256 (QLLQHSISTN…QQHDLMETVN (98 aa)) are a coiled coil. One can recognise a Fibrinogen C-terminal domain in the interval 275 to 495 (KEEQTTFRDC…ATTMMIRPAD (221 aa)). A disulfide bond links C284 and C313. Ca(2+)-binding residues include D429, D431, C433, and C435. Intrachain disulfides connect C433-C435 and C437-C450.

In terms of assembly, interacts with TEK/TIE2, competing for the same binding site as ANGPT1. Interacts with ITGA5. Interacts with SVEP1/polydom. Interacts with THBD; this interaction significantly inhibits the generation of activated PC and TAFIa/CPB2 by the thrombin/thrombomodulin complex. As to expression, expressed in the ovary, uterus and placenta.

The protein resides in the secreted. Functionally, binds to TEK/TIE2, competing for the ANGPT1 binding site, and modulating ANGPT1 signaling. Can induce tyrosine phosphorylation of TEK/TIE2 in the absence of ANGPT1. In the absence of angiogenic inducers, such as VEGF, ANGPT2-mediated loosening of cell-matrix contacts may induce endothelial cell apoptosis with consequent vascular regression. In concert with VEGF, it may facilitate endothelial cell migration and proliferation, thus serving as a permissive angiogenic signal. Involved in the regulation of lymphangiogenesis. This is Angiopoietin-2 (Angpt2) from Mus musculus (Mouse).